The following is a 282-amino-acid chain: Cell cycle checkpoint protein RAD1 (282 aa).

Belongs to the rad1 family. Component of the toroidal 9-1-1 (RAD9-RAD1-HUS1) complex, composed of RAD9A, RAD1 and HUS1. The 9-1-1 complex associates with LIG1, POLB, FEN1, RAD17, HDAC1, RPA1 and RPA2. The 9-1-1 complex associates with the RAD17-RFC complex. RAD1 interacts with POLB, FEN1, HUS1, HUS1B, RAD9A and RAD9B. Interacts with DNAJC7. Interacts with RHNO1; interaction is direct. Expressed in testis, uterus, bladder, spleen, ovaries, lung, brain and muscle (at protein level).

It is found in the nucleus. Component of the 9-1-1 cell-cycle checkpoint response complex that plays a major role in DNA repair. The 9-1-1 complex is recruited to DNA lesion upon damage by the RAD17-replication factor C (RFC) clamp loader complex. Acts then as a sliding clamp platform on DNA for several proteins involved in long-patch base excision repair (LP-BER). The 9-1-1 complex stimulates DNA polymerase beta (POLB) activity by increasing its affinity for the 3'-OH end of the primer-template and stabilizes POLB to those sites where LP-BER proceeds; endonuclease FEN1 cleavage activity on substrates with double, nick, or gap flaps of distinct sequences and lengths; and DNA ligase I (LIG1) on long-patch base excision repair substrates. The 9-1-1 complex is necessary for the recruitment of RHNO1 to sites of double-stranded breaks (DSB) occurring during the S phase. This Homo sapiens (Human) protein is Cell cycle checkpoint protein RAD1 (RAD1).